We begin with the raw amino-acid sequence, 416 residues long: Putative UV-damage repair protein UvrX (416 aa).

Residues 12–196 (ILCVDMKSFY…RPLSKMWGIG (185 aa)) enclose the UmuC domain. D16 and D115 together coordinate Mg(2+). E116 is an active-site residue.

The protein belongs to the DNA polymerase type-Y family. Requires Mg(2+) as cofactor.

The polypeptide is Putative UV-damage repair protein UvrX (uvrX) (Bacillus subtilis (strain 168)).